We begin with the raw amino-acid sequence, 221 residues long: uncharacterized protein (221 aa).

This is an uncharacterized protein from Archaeoglobus fulgidus (strain ATCC 49558 / DSM 4304 / JCM 9628 / NBRC 100126 / VC-16).